The primary structure comprises 377 residues: Homoserine O-acetyltransferase (377 aa).

Positions 48 to 347 constitute an AB hydrolase-1 domain; it reads NVVLIEHALT…PVGHDAFLTE (300 aa). The Nucleophile role is filled by S143. Position 213 (R213) interacts with substrate. Residues D311 and H341 contribute to the active site. D342 is a substrate binding site.

Belongs to the AB hydrolase superfamily. MetX family. In terms of assembly, homodimer.

It is found in the cytoplasm. It catalyses the reaction L-homoserine + acetyl-CoA = O-acetyl-L-homoserine + CoA. It functions in the pathway amino-acid biosynthesis; L-methionine biosynthesis via de novo pathway; O-acetyl-L-homoserine from L-homoserine: step 1/1. Its function is as follows. Transfers an acetyl group from acetyl-CoA to L-homoserine, forming acetyl-L-homoserine. The protein is Homoserine O-acetyltransferase of Corynebacterium efficiens (strain DSM 44549 / YS-314 / AJ 12310 / JCM 11189 / NBRC 100395).